The primary structure comprises 286 residues: Elongation factor Ts (286 aa).

The interval 82-85 is involved in Mg(2+) ion dislocation from EF-Tu; the sequence is TDFV.

This sequence belongs to the EF-Ts family.

Its subcellular location is the cytoplasm. Functionally, associates with the EF-Tu.GDP complex and induces the exchange of GDP to GTP. It remains bound to the aminoacyl-tRNA.EF-Tu.GTP complex up to the GTP hydrolysis stage on the ribosome. This chain is Elongation factor Ts, found in Hamiltonella defensa subsp. Acyrthosiphon pisum (strain 5AT).